A 151-amino-acid chain; its full sequence is MTDLNVTQLGRVVDAPESPEAAVLERVPNPQSDVLYLARFVAPEFTSLCPVTGQPDFAHLVIDYAPGDWLIESKSLKLYLTSFRNHGSFHEDCTVKVARKIVEIAQPRWLRIGGYWYPRGGIPIDVFWQTGPAPEGLWVPDQGVAPYRGRG.

Residue Cys49 is the Thioimide intermediate of the active site. The Proton donor role is filled by Asp56. Residues 71–73 (IES) and 90–91 (HE) each bind substrate.

This sequence belongs to the GTP cyclohydrolase I family. QueF type 1 subfamily.

The protein localises to the cytoplasm. The enzyme catalyses 7-aminomethyl-7-carbaguanine + 2 NADP(+) = 7-cyano-7-deazaguanine + 2 NADPH + 3 H(+). The protein operates within tRNA modification; tRNA-queuosine biosynthesis. In terms of biological role, catalyzes the NADPH-dependent reduction of 7-cyano-7-deazaguanine (preQ0) to 7-aminomethyl-7-deazaguanine (preQ1). The chain is NADPH-dependent 7-cyano-7-deazaguanine reductase from Caulobacter vibrioides (strain ATCC 19089 / CIP 103742 / CB 15) (Caulobacter crescentus).